The primary structure comprises 240 residues: Small ribosomal subunit protein uS3 (240 aa).

One can recognise a KH type-2 domain in the interval isoleucine 39–asparagine 109. The segment at threonine 216–glutamine 240 is disordered.

It belongs to the universal ribosomal protein uS3 family. As to quaternary structure, part of the 30S ribosomal subunit. Forms a tight complex with proteins S10 and S14.

Its function is as follows. Binds the lower part of the 30S subunit head. Binds mRNA in the 70S ribosome, positioning it for translation. The sequence is that of Small ribosomal subunit protein uS3 from Picosynechococcus sp. (strain ATCC 27264 / PCC 7002 / PR-6) (Agmenellum quadruplicatum).